A 554-amino-acid polypeptide reads, in one-letter code: Beta-eudesmol synthase (554 aa).

Mg(2+) is bound by residues Asp305, Asp309, and Glu456. Residues 305–309 carry the DDXXD motif motif; the sequence is DDIYD.

Belongs to the terpene synthase family. The cofactor is Mg(2+). It depends on Mn(2+) as a cofactor. In terms of tissue distribution, expressed in rhizomes. Detected in stems, but not in leaves.

The protein resides in the cytoplasm. The catalysed reaction is (2E,6E)-farnesyl diphosphate + H2O = beta-eudesmol + diphosphate. It carries out the reaction (2E,6E)-farnesyl diphosphate + H2O = 10-epi-gamma-eudesmol + diphosphate. It catalyses the reaction (2E,6E)-farnesyl diphosphate + H2O = alpha-eudesmol + diphosphate. It functions in the pathway secondary metabolite biosynthesis; terpenoid biosynthesis. Functionally, involved in the biosynthesis of beta-eudesmol, a sesquiterpene with antifungal activity and responsible for resistance of plants to ant attack. Produces mainly beta-eudesmol, but also smaller amounts of 10-epi-gamma-eudesmol, alpha-eudesmol and aristolene. In Zingiber zerumbet (Shampoo ginger), this protein is Beta-eudesmol synthase (ZSS2).